Consider the following 286-residue polypeptide: Aspartate/glutamate leucyltransferase (286 aa).

This sequence belongs to the R-transferase family. Bpt subfamily.

It localises to the cytoplasm. The catalysed reaction is N-terminal L-glutamyl-[protein] + L-leucyl-tRNA(Leu) = N-terminal L-leucyl-L-glutamyl-[protein] + tRNA(Leu) + H(+). It carries out the reaction N-terminal L-aspartyl-[protein] + L-leucyl-tRNA(Leu) = N-terminal L-leucyl-L-aspartyl-[protein] + tRNA(Leu) + H(+). Its function is as follows. Functions in the N-end rule pathway of protein degradation where it conjugates Leu from its aminoacyl-tRNA to the N-termini of proteins containing an N-terminal aspartate or glutamate. The chain is Aspartate/glutamate leucyltransferase from Jannaschia sp. (strain CCS1).